We begin with the raw amino-acid sequence, 513 residues long: Protein disulfide-isomerase 2 (513 aa).

Residues 1–20 form the signal peptide; it reads MNKFLALLFVLALFANIAFS. Thioredoxin domains are found at residues 21–147 and 355–486; these read CEGH…EELK and DVIG…DNAA. Catalysis depends on nucleophile residues cysteine 70, cysteine 73, cysteine 406, and cysteine 409. 2 disulfide bridges follow: cysteine 70–cysteine 73 and cysteine 406–cysteine 409. Positions 491 to 513 are disordered; it reads LPSSQTDDNVESKKDSSAKHDEL. Residues 500 to 513 are compositionally biased toward basic and acidic residues; the sequence is VESKKDSSAKHDEL. Positions 510–513 match the Prevents secretion from ER motif; that stretch reads HDEL.

It belongs to the protein disulfide isomerase family.

The protein resides in the endoplasmic reticulum lumen. The enzyme catalyses Catalyzes the rearrangement of -S-S- bonds in proteins.. Its function is as follows. Participates in the folding of proteins containing disulfide bonds, may be involved in glycosylation, prolyl hydroxylation and triglyceride transfer. The sequence is that of Protein disulfide-isomerase 2 (pdi2) from Dictyostelium discoideum (Social amoeba).